The sequence spans 508 residues: MGLPWYRVHTVVLNDPGRLLAVHIMHTALVSGWAGSMALYELAVFDPSDPVLDPMWRQGMFVIPFMTRLGITNSWGGWSITGGTITNPGIWSYEGVAGAHIVFSGLCFLAAIWHWVYWDLQIFCDERTGKPSLDLPKIFGIHLFLSGLACFGFGAFHVTGLYGPGIWVSDPYGLTGKVQSVNPAWGVEGFDPFVPGGIASHHIAAGTLGILAGLFHLSVRPPQRLYKGLRMGNIETVLSSSIAAVFFAAFVVAGTMWYGSATTPIELFGPTRYQWDQGYFQQEIYRRVGAGLAENKSLSDVWSKIPEKLAFYDYIGNNPAKGGLFRAGSMDNGDGIAVGWLGHPIFRDKEGRELFVRRMPTFFETFPVVLVDGDGIVRADVPFRRAESKYSVEQVGVTVEFYGGELDGVSYSDPATVKKYARRAQLGEIFELDRATLKSDGVFRSSPRGWFTFGHASFALLFFFGHIWHGARTLFRDVFAGIDPDLDAQVEFGAFQKLGDPTTKRQVV.

6 consecutive transmembrane segments (helical) span residues 21–36 (AVHI…WAGS), 101–115 (IVFS…IWHW), 140–156 (GIHL…FGAF), 203–218 (IAAG…FHLS), 237–252 (VLSS…AFVV), and 457–472 (SFAL…HGAR).

It belongs to the PsbB/PsbC family. PsbB subfamily. In terms of assembly, PSII is composed of 1 copy each of membrane proteins PsbA, PsbB, PsbC, PsbD, PsbE, PsbF, PsbH, PsbI, PsbJ, PsbK, PsbL, PsbM, PsbT, PsbX, PsbY, PsbZ, Psb30/Ycf12, at least 3 peripheral proteins of the oxygen-evolving complex and a large number of cofactors. It forms dimeric complexes. It depends on Binds multiple chlorophylls. PSII binds additional chlorophylls, carotenoids and specific lipids. as a cofactor.

The protein localises to the plastid. Its subcellular location is the chloroplast thylakoid membrane. Functionally, one of the components of the core complex of photosystem II (PSII). It binds chlorophyll and helps catalyze the primary light-induced photochemical processes of PSII. PSII is a light-driven water:plastoquinone oxidoreductase, using light energy to abstract electrons from H(2)O, generating O(2) and a proton gradient subsequently used for ATP formation. The sequence is that of Photosystem II CP47 reaction center protein from Ranunculus macranthus (Large buttercup).